A 142-amino-acid chain; its full sequence is Small heat shock protein IbpB (142 aa).

The region spanning 26 to 137 (SGESQSFPPY…PPQRIAINER (112 aa)) is the sHSP domain.

The protein belongs to the small heat shock protein (HSP20) family. Homodimer. Forms homomultimers of about 100-150 subunits at optimal growth temperatures. Conformation changes to oligomers at high temperatures or high ionic concentrations. The decrease in size of the multimers is accompanied by an increase in chaperone activity.

The protein resides in the cytoplasm. Associates with aggregated proteins, together with IbpA, to stabilize and protect them from irreversible denaturation and extensive proteolysis during heat shock and oxidative stress. Aggregated proteins bound to the IbpAB complex are more efficiently refolded and reactivated by the ATP-dependent chaperone systems ClpB and DnaK/DnaJ/GrpE. Its activity is ATP-independent. This is Small heat shock protein IbpB from Salmonella typhi.